The sequence spans 129 residues: Glycine cleavage system H protein (129 aa).

Residues 24-106 (TYTVGITEHA…YADGWIFKIK (83 aa)) form the Lipoyl-binding domain. Lys65 carries the post-translational modification N6-lipoyllysine.

This sequence belongs to the GcvH family. The glycine cleavage system is composed of four proteins: P, T, L and H. The cofactor is (R)-lipoate.

Functionally, the glycine cleavage system catalyzes the degradation of glycine. The H protein shuttles the methylamine group of glycine from the P protein to the T protein. In Salmonella arizonae (strain ATCC BAA-731 / CDC346-86 / RSK2980), this protein is Glycine cleavage system H protein.